We begin with the raw amino-acid sequence, 802 residues long: Threonine--tRNA ligase 2, cytoplasmic (802 aa).

A2 carries the post-translational modification N-acetylalanine. Coiled-coil stretches lie at residues 3–23 (AEAL…EDIR) and 76–96 (AEER…AQEA). The span at 86 to 98 (ESAELEAAQEAGA) shows a compositional bias: low complexity. The interval 86–123 (ESAELEAAQEAGAQPPPSQSQDKDMKKKKMKESEADSE) is disordered. Over residues 106–123 (QDKDMKKKKMKESEADSE) the composition is skewed to basic and acidic residues. In terms of domain architecture, TGS spans 157 to 222 (DTSNIITVRV…EGDSSLELLT (66 aa)). Phosphoserine is present on S453. Positions 786-792 (KLKNLRK) match the Nuclear localization signal motif.

The protein belongs to the class-II aminoacyl-tRNA synthetase family. As to quaternary structure, may be a component of the multisynthetase complex (MSC), a large multi-subunit complex which contains at least eight different aminoacyl-tRNA synthetases plus three auxillary subunits AIMP1, AIMP2 and EEF1E1. Interacts with the MSC components EPRS1, AIMP1, AIMP2 and KARS1.

Its subcellular location is the cytoplasm. The protein resides in the nucleus. It carries out the reaction tRNA(Thr) + L-threonine + ATP = L-threonyl-tRNA(Thr) + AMP + diphosphate + H(+). Its function is as follows. Catalyzes the attachment of threonine to tRNA(Thr) in a two-step reaction: threonine is first activated by ATP to form Thr-AMP and then transferred to the acceptor end of tRNA(Thr). Also edits incorrectly charged tRNA(Thr) via its editing domain, at the post-transfer stage. The sequence is that of Threonine--tRNA ligase 2, cytoplasmic from Homo sapiens (Human).